Here is a 358-residue protein sequence, read N- to C-terminus: Flap endonuclease 1 (358 aa).

The segment at 1 to 103 (MGIKRLSKLI…HEFEKRTKRR (103 aa)) is N-domain. Residue aspartate 34 coordinates Mg(2+). DNA-binding residues include arginine 47 and arginine 69. Residues aspartate 85, glutamate 157, glutamate 159, aspartate 178, and aspartate 180 each coordinate Mg(2+). The tract at residues 121-252 (LVSKYDRMNV…KRAFEYIKKY (132 aa)) is I-domain. Glutamate 157 lines the DNA pocket. The DNA site is built by glycine 230 and aspartate 232. Mg(2+) is bound at residue aspartate 232. The tract at residues 346-354 (KQTRIDSFF) is interaction with PCNA.

The protein belongs to the XPG/RAD2 endonuclease family. FEN1 subfamily. Interacts with PCNA. Three molecules of FEN1 bind to one PCNA trimer with each molecule binding to one PCNA monomer. PCNA stimulates the nuclease activity without altering cleavage specificity. Requires Mg(2+) as cofactor. Phosphorylated. Phosphorylation upon DNA damage induces relocalization to the nuclear plasma.

Its subcellular location is the nucleus. The protein localises to the nucleolus. It localises to the nucleoplasm. It is found in the mitochondrion. Structure-specific nuclease with 5'-flap endonuclease and 5'-3' exonuclease activities involved in DNA replication and repair. During DNA replication, cleaves the 5'-overhanging flap structure that is generated by displacement synthesis when DNA polymerase encounters the 5'-end of a downstream Okazaki fragment. It enters the flap from the 5'-end and then tracks to cleave the flap base, leaving a nick for ligation. Also involved in the long patch base excision repair (LP-BER) pathway, by cleaving within the apurinic/apyrimidinic (AP) site-terminated flap. Acts as a genome stabilization factor that prevents flaps from equilibrating into structures that lead to duplications and deletions. Also possesses 5'-3' exonuclease activity on nicked or gapped double-stranded DNA, and exhibits RNase H activity. Also involved in replication and repair of rDNA and in repairing mitochondrial DNA. This is Flap endonuclease 1 from Enterocytozoon bieneusi (strain H348) (Microsporidian parasite).